Here is a 726-residue protein sequence, read N- to C-terminus: X-ray repair cross-complementing protein 5 (726 aa).

The VWFA domain maps to 8 to 160 (AVVLCMDVGL…ANLKKAEITL (153 aa)). The interval 137–164 (LSSPFSVDQLEVIIANLKKAEITLQFFL) is leucine-zipper. The segment covering 175-186 (GSSNNRGNAGSS) has biased composition (low complexity). The interval 175–198 (GSSNNRGNAGSSDRGCGPGKGLSD) is disordered. In terms of domain architecture, Ku spans 253 to 449 (GSSLSIRIVG…NKKFTPTESQ (197 aa)). Residues 714–722 (EDEGDVDDL) carry the EEXXXDL motif motif.

Belongs to the ku80 family. As to quaternary structure, heterodimer composed of xrcc5/Ku80 and xrcc6/Ku70. Ubiquitinated via 'Lys-48'-linked polyubiquitination at DNA double strand break sites (DSBs), leading to its release from DSBs and subsequent proteasomal degradation. Polyubiquitination is not required for completion of NHEJ. As to expression, expressed at high levels in oocyte and testis.

The protein localises to the nucleus. Single-stranded DNA-dependent ATP-dependent helicase that plays a key role in DNA non-homologous end joining (NHEJ). This is X-ray repair cross-complementing protein 5 from Xenopus laevis (African clawed frog).